Reading from the N-terminus, the 88-residue chain is Protein U62 (88 aa).

The polypeptide is Protein U62 (Elephantid herpesvirus 1 (isolate Asian elephant/Berlin/Kiba/1998) (EIHV-1)).